The sequence spans 182 residues: UPF0690 protein C1orf52 (182 aa).

2 disordered regions span residues 1-67 (MAAE…RSVT) and 100-182 (WKSN…KKKK). Over residues 23 to 32 (SDEEDNIEPE) the composition is skewed to acidic residues. Basic and acidic residues predominate over residues 50-63 (NKAEKRLPGPDELF). At threonine 67 the chain carries Phosphothreonine. Phosphotyrosine is present on tyrosine 132. Positions 151 to 162 (EGEETLESDDEK) are enriched in acidic residues. Serine 158 bears the Phosphoserine mark. Over residues 172–182 (VEPGEPAKKKK) the composition is skewed to basic and acidic residues.

This sequence belongs to the UPF0690 family. In terms of tissue distribution, expressed in all tissues tested including heart, placenta, liver, skeletal muscle, kidney and pancreas. Weak expression in brain and lung.

The protein is UPF0690 protein C1orf52 (C1orf52) of Homo sapiens (Human).